We begin with the raw amino-acid sequence, 507 residues long: Polygalacturonase (507 aa).

The N-terminal stretch at 1-20 is a signal peptide; the sequence is MSMKFMAALAFLALQLIVMA. Positions 21-54 are excised as a propeptide; it reads AGEDQSAQIMLDSDTKQYHRSSRNLRKRVHHARH. 6 PbH1 repeats span residues 215 to 241, 242 to 263, 265 to 285, 295 to 316, 324 to 345, and 358 to 385; these read CDGVKIQGIKIKAPRDSPNTDGIDIFA, SKRFEIEKCTIGTGDDCVAVGT, SSNITIKDLTCGPGHGMSIGS, VSFVHLDGAKFIDTQNGLRIKT, ASHITYENVEMINAENPILINQ, and RSAVKIQDVTFKNIHGTSATTAAIQLMC. The active-site Proton donor is the Asp-256. Asn-267 is a glycosylation site (N-linked (GlcNAc...) asparagine). Residue His-279 is part of the active site.

Belongs to the glycosyl hydrolase 28 family.

The protein localises to the secreted. The protein resides in the cell wall. It catalyses the reaction (1,4-alpha-D-galacturonosyl)n+m + H2O = (1,4-alpha-D-galacturonosyl)n + (1,4-alpha-D-galacturonosyl)m.. The polypeptide is Polygalacturonase (JNA2) (Juniperus ashei (Ozark white cedar)).